Reading from the N-terminus, the 553-residue chain is Cytokine-like nuclear factor N-PAC (553 aa).

The PWWP domain occupies 8–66 (LGDLVWGKLGRYPPWPGKIVNPPKDLKKPRGKKCFFVKFFGTEDHAWIKVEQLKPYHLH). 2 stretches are compositionally biased toward basic and acidic residues: residues 92 to 145 (KTKG…EGKK) and 162 to 182 (RAQDQSPRKRGRPPKDEKDLT). The segment at 92 to 188 (KTKGKDQASS…KDLTIPESST (97 aa)) is disordered. Positions 168 to 180 (PRKRGRPPKDEKD) form a DNA-binding region, a.T hook. Positions 214–217 (DPHF) are interaction with histone H3. A dehydrogenase domain region spans residues 261 to 553 (GSITPTDKKI…MSAVYRAYIH (293 aa)). NAD(+) is bound by residues 271-285 (GFLGLGLMGSGIVSN), Thr362, and Lys505.

Belongs to the HIBADH-related family. NP60 subfamily. In terms of assembly, homotetramere. Binds to mononucleosomes.

It localises to the nucleus. The protein resides in the chromosome. Its function is as follows. Cytokine-like nuclear factor with chromatin gene reader activity involved in chromatin modification and regulation of gene expression. Acts as a nucleosome-destabilizing factor that is recruited to genes during transcriptional activation. Recognizes and binds histone H3 without a preference for specific epigenetic markers and also binds DNA. Interacts with KDM1B and promotes its histone demethylase activity by facilitating the capture of H3 tails, they form a multifunctional enzyme complex that modifies transcribed chromatin and facilitates Pol II transcription through nucleosomes. In Gallus gallus (Chicken), this protein is Cytokine-like nuclear factor N-PAC (GLYR1).